Reading from the N-terminus, the 216-residue chain is NKG2-D type II integral membrane protein (216 aa).

Residues 1–51 (MGWIRGRRSRHSWEMSEFHNYNLDLKKSDFSTRWQKQRCPVVKSKCRENAS) lie on the Cytoplasmic side of the membrane. Residues 52–72 (PFFFCCFIAVAMGIRFIIMVT) traverse the membrane as a helical; Signal-anchor for type II membrane protein segment. At 73–216 (IWSAVFLNSL…NTYICMQRTV (144 aa)) the chain is on the extracellular side. Disulfide bonds link cysteine 96–cysteine 105, cysteine 99–cysteine 110, cysteine 127–cysteine 211, and cysteine 189–cysteine 203. The C-type lectin domain occupies 98-213 (PCPKNWICYK…STPNTYICMQ (116 aa)). Residues asparagine 131, asparagine 163, and asparagine 202 are each glycosylated (N-linked (GlcNAc...) asparagine).

In terms of assembly, homodimer; disulfide-linked. Heterohexamer composed of two subunits of KLRK1 and four subunits of HCST/DAP10. Interacts (via transmembrane domain) with HCST/DAP10 (via transmembrane domain); the interaction is required for KLRK1 NK cell surface and induces NK cell-mediated cytotoxicity. Does not interact with TYROBP. Interacts with CEACAM1; recruits PTPN6 that dephosphorylates VAV1. In terms of tissue distribution, expressed in natural killer (NK) cells, CD8(+) alpha-beta and gamma-delta T-cells. Expressed on essentially all CD56+CD3- NK cells from freshly isolated PBMC. Expressed in interferon-producing killer dendritic cells (IKDCs).

It localises to the cell membrane. Functionally, functions as an activating and costimulatory receptor involved in immunosurveillance upon binding to various cellular stress-inducible ligands displayed at the surface of autologous tumor cells and virus-infected cells. Provides both stimulatory and costimulatory innate immune responses on activated killer (NK) cells, leading to cytotoxic activity. Acts as a costimulatory receptor for T-cell receptor (TCR) in CD8(+) T-cell-mediated adaptive immune responses by amplifying T-cell activation. Stimulates perforin-mediated elimination of ligand-expressing tumor cells. Signaling involves calcium influx, culminating in the expression of TNF-alpha. Participates in NK cell-mediated bone marrow graft rejection. May play a regulatory role in differentiation and survival of NK cells. Binds to ligands belonging to various subfamilies of MHC class I-related glycoproteins including MICA, MICB, RAET1E, RAET1G, RAET1L/ULBP6, ULBP1, ULBP2, ULBP3 (ULBP2&gt;ULBP1&gt;ULBP3) and ULBP4. This is NKG2-D type II integral membrane protein (KLRK1) from Homo sapiens (Human).